Consider the following 437-residue polypeptide: Phosphoribosylamine--glycine ligase (437 aa).

Residues 110-322 (KNLLRSADIP…LVEVMQAVVD (213 aa)) form the ATP-grasp domain. ATP is bound at residue 142–203 (EPTDPVNVVV…EERLTGPEVS (62 aa)). Positions 292 and 294 each coordinate Mg(2+).

Belongs to the GARS family. The cofactor is Mg(2+). It depends on Mn(2+) as a cofactor.

It catalyses the reaction 5-phospho-beta-D-ribosylamine + glycine + ATP = N(1)-(5-phospho-beta-D-ribosyl)glycinamide + ADP + phosphate + H(+). It participates in purine metabolism; IMP biosynthesis via de novo pathway; N(1)-(5-phospho-D-ribosyl)glycinamide from 5-phospho-alpha-D-ribose 1-diphosphate: step 2/2. The polypeptide is Phosphoribosylamine--glycine ligase (Rhodopirellula baltica (strain DSM 10527 / NCIMB 13988 / SH1)).